The sequence spans 536 residues: MNELGVHNPANGVAELGLGEASRVFYNLNESELYEHAIRNGEAELTIDGALRAVTGQHTGRSPKDKFVVRDASTENTIWWDNNKPLSPENFELLRQDMLAHAAGKTLYVQDLIGGADEENALPTRVVTELAWHSLFIRNLLIRPKRETLSGFSQKLTIINLPSFKADPARHGVRSETVIACDLTNGLVLIGGTSYAGENKKSVFTVLNYLLPAKGVMPMHCSANVGPEGDSAVFFGLSGTGKTTLSADPARTLIGDDEHGWGEHGIFNFEGGCYAKAIKLSSEAEPEIYAATNRFGTVLENVVLDESRVPDFNDNSLTENTRSAYPLHFIPNASETGIAGHPKTIIMLTADAFGVLPPIARLTPEQAMYHFLSGYTAKVAGTEKGVTEPEATFSTCFGAPFMPRHPAEYGNLLRELIGKHGVDCWLVNTGWTGGAYGIGKRMPIKATRALLTAALTGDLKNAQFRTDANFGFAVPLSLDGVDGAILDPRSTWADGAAYDAQAKKLVSMFVSNFTKFEDHVDSKVRDAAPGLLLAAE.

The substrate site is built by Arg61, Tyr195, and Lys201. ATP-binding positions include Lys201, His220, and 236–244; that span reads GLSGTGKTT. Mn(2+) contacts are provided by Lys201 and His220. Residue Asp257 coordinates Mn(2+). Residues Glu285, Arg322, and Thr447 each contribute to the ATP site. Arg322 is a substrate binding site.

The protein belongs to the phosphoenolpyruvate carboxykinase (ATP) family. Mn(2+) is required as a cofactor.

Its subcellular location is the cytoplasm. It catalyses the reaction oxaloacetate + ATP = phosphoenolpyruvate + ADP + CO2. Its pathway is carbohydrate biosynthesis; gluconeogenesis. In terms of biological role, involved in the gluconeogenesis. Catalyzes the conversion of oxaloacetate (OAA) to phosphoenolpyruvate (PEP) through direct phosphoryl transfer between the nucleoside triphosphate and OAA. In Agrobacterium fabrum (strain C58 / ATCC 33970) (Agrobacterium tumefaciens (strain C58)), this protein is Phosphoenolpyruvate carboxykinase (ATP).